Reading from the N-terminus, the 348-residue chain is MSAEHDQIRAVAWTGAGVRLLDQRRLPQEEIYWTIACVSDVAQAITKMVVRGAPAIGIAAAYGVVLAARARFSEAGSGWKQLLEADLCDLEAARPTAINLAWALARMQAIIQGLPDHRDPESALLVEARCIHEEDIAANRRMGELGTTLIEGSVGVLTHCNTGSLATGGFGTALGVIRHAYGKGRIEKVFADETRPWLQGARLTTWELLRDGIPVVLIADSVAPYLLGQGEVQWVIVGADRIAANGDTANKIGSYGLAVAARYHNVRFMVVAPTSTIDWNLSDGTRIPIEQRPPEEVLTLGGKAIATVGAEAYNPAFDVIPAHLIDAIVTERGVVRQPTHERMKALFG.

Substrate-binding positions include 51–53, Arg-94, and Gln-199; that span reads RGA. Asp-240 serves as the catalytic Proton donor. Position 250–251 (250–251) interacts with substrate; it reads NK.

This sequence belongs to the eIF-2B alpha/beta/delta subunits family. MtnA subfamily.

It catalyses the reaction 5-(methylsulfanyl)-alpha-D-ribose 1-phosphate = 5-(methylsulfanyl)-D-ribulose 1-phosphate. The protein operates within amino-acid biosynthesis; L-methionine biosynthesis via salvage pathway; L-methionine from S-methyl-5-thio-alpha-D-ribose 1-phosphate: step 1/6. Its function is as follows. Catalyzes the interconversion of methylthioribose-1-phosphate (MTR-1-P) into methylthioribulose-1-phosphate (MTRu-1-P). This chain is Methylthioribose-1-phosphate isomerase, found in Nitrosococcus oceani (strain ATCC 19707 / BCRC 17464 / JCM 30415 / NCIMB 11848 / C-107).